The chain runs to 177 residues: Large ribosomal subunit protein uL6 (177 aa).

The protein belongs to the universal ribosomal protein uL6 family. Part of the 50S ribosomal subunit.

Functionally, this protein binds to the 23S rRNA, and is important in its secondary structure. It is located near the subunit interface in the base of the L7/L12 stalk, and near the tRNA binding site of the peptidyltransferase center. The chain is Large ribosomal subunit protein uL6 from Sinorhizobium medicae (strain WSM419) (Ensifer medicae).